The primary structure comprises 1710 residues: Phosphatidylinositol 4-phosphate 5-kinase (1710 aa).

Positions 68–98 (YKSIFKAFDLNNDNYLDFYEFCVAINIMLKG) constitute an EF-hand domain. Ca(2+)-binding residues include Asp-76, Asn-78, Asp-80, Tyr-82, and Glu-87. 3 disordered regions span residues 139–255 (NNMN…DPIN), 427–479 (KQKK…IKSV), and 895–993 (GEGH…HNNN). The span at 140 to 235 (NMNGDNINGD…HNNNSHNNNN (96 aa)) shows a compositional bias: low complexity. Positions 236-248 (KAENSLGQPLNEK) are enriched in polar residues. Positions 427–444 (KQKKKKKKKKKKKKKKEK) are enriched in basic residues. Residues 456–468 (SSSMENKSQNKSQ) are compositionally biased toward low complexity. A compositionally biased stretch (acidic residues) spans 902 to 973 (EEEEKNDDEE…DDNDDNDDND (72 aa)). Basic and acidic residues predominate over residues 974-987 (EKSNIKIENKKDVP). Residues 1334–1709 (QKKTFHRILA…RFVTFIENHM (376 aa)) form the PIPK domain.

The catalysed reaction is a 1,2-diacyl-sn-glycero-3-phospho-(1D-myo-inositol 4-phosphate) + ATP = a 1,2-diacyl-sn-glycero-3-phospho-(1D-myo-inositol-4,5-bisphosphate) + ADP + H(+). Its activity is regulated as follows. Catalytic activity is increase by myristoylated ARF1. Phosphatidic acid has no effect on catalytic activity. In terms of biological role, catalyzes the phosphorylation of phosphatidylinositol 4-phosphate (PtdIns(4)P/PI4P) to form phosphatidylinositol 4,5-bisphosphate (PtdIns(4,5)P2/PIP2), a lipid second messenger that regulates several cellular processes. The sequence is that of Phosphatidylinositol 4-phosphate 5-kinase from Plasmodium falciparum (isolate 3D7).